Reading from the N-terminus, the 228-residue chain is 2-C-methyl-D-erythritol 4-phosphate cytidylyltransferase (228 aa).

It belongs to the IspD/TarI cytidylyltransferase family. IspD subfamily.

The enzyme catalyses 2-C-methyl-D-erythritol 4-phosphate + CTP + H(+) = 4-CDP-2-C-methyl-D-erythritol + diphosphate. The protein operates within isoprenoid biosynthesis; isopentenyl diphosphate biosynthesis via DXP pathway; isopentenyl diphosphate from 1-deoxy-D-xylulose 5-phosphate: step 2/6. Functionally, catalyzes the formation of 4-diphosphocytidyl-2-C-methyl-D-erythritol from CTP and 2-C-methyl-D-erythritol 4-phosphate (MEP). The protein is 2-C-methyl-D-erythritol 4-phosphate cytidylyltransferase of Actinobacillus pleuropneumoniae serotype 5b (strain L20).